The primary structure comprises 61 residues: Translational regulator CsrA (61 aa).

The protein belongs to the CsrA/RsmA family. Homodimer; the beta-strands of each monomer intercalate to form a hydrophobic core, while the alpha-helices form wings that extend away from the core.

The protein localises to the cytoplasm. A key translational regulator that binds mRNA to regulate translation initiation and/or mRNA stability. Mediates global changes in gene expression, shifting from rapid growth to stress survival by linking envelope stress, the stringent response and the catabolite repression systems. Usually binds in the 5'-UTR; binding at or near the Shine-Dalgarno sequence prevents ribosome-binding, repressing translation, binding elsewhere in the 5'-UTR can activate translation and/or stabilize the mRNA. Its function is antagonized by small RNA(s). In Mannheimia succiniciproducens (strain KCTC 0769BP / MBEL55E), this protein is Translational regulator CsrA.